A 287-amino-acid chain; its full sequence is Small ribosomal subunit protein uS10m (287 aa).

The transit peptide at 1 to 33 (MSLFSPHRILLRTGSAFQLATATRALLSTSSQL) directs the protein to the mitochondrion. Positions 33-43 (LRNTKNAQSGL) are enriched in polar residues. The tract at residues 33–84 (LRNTKNAQSGLAEQARAEEPVASSPSQTTRPEQKSLEEETTKQTQTHADSTV) is disordered. Positions 63–73 (PEQKSLEEETT) are enriched in basic and acidic residues. Positions 74-84 (KQTQTHADSTV) are enriched in polar residues.

Belongs to the universal ribosomal protein uS10 family. Part of the mitochondrial small ribosomal subunit.

The protein resides in the mitochondrion. Involved in mitochondrial genome encoded proteins translation. Involved in the binding of tRNA to the ribosomes. This Emericella nidulans (strain FGSC A4 / ATCC 38163 / CBS 112.46 / NRRL 194 / M139) (Aspergillus nidulans) protein is Small ribosomal subunit protein uS10m (rsm10).